The primary structure comprises 78 residues: Large ribosomal subunit protein bL28 (78 aa).

A disordered region spans residues 1-25 (MSRVCQVTGKRPAVGNNRSHARNAT).

It belongs to the bacterial ribosomal protein bL28 family.

In Vibrio vulnificus (strain CMCP6), this protein is Large ribosomal subunit protein bL28.